The sequence spans 877 residues: Phosphoenolpyruvate carboxylase (877 aa).

Residues His-138 and Lys-543 contribute to the active site.

It belongs to the PEPCase type 1 family. Requires Mg(2+) as cofactor.

It carries out the reaction oxaloacetate + phosphate = phosphoenolpyruvate + hydrogencarbonate. Its function is as follows. Forms oxaloacetate, a four-carbon dicarboxylic acid source for the tricarboxylic acid cycle. This Aeromonas salmonicida (strain A449) protein is Phosphoenolpyruvate carboxylase.